Here is a 455-residue protein sequence, read N- to C-terminus: tRNA modification GTPase MnmE (455 aa).

Residue Arg-22 coordinates (6S)-5-formyl-5,6,7,8-tetrahydrofolate. A disordered region spans residues 43 to 67 (RRATRAALRSPPSGPGPTGPGPEEG). (6S)-5-formyl-5,6,7,8-tetrahydrofolate is bound by residues Glu-92 and Arg-132. The region spanning 228–381 (GLQVAVVGAP…LEAALESRAR (154 aa)) is the TrmE-type G domain. Asn-238 contributes to the K(+) binding site. GTP contacts are provided by residues 238-243 (NVGKSS), 257-263 (SDIAGTT), and 282-285 (DTAG). A Mg(2+)-binding site is contributed by Ser-242. Positions 257, 259, and 262 each coordinate K(+). Position 263 (Thr-263) interacts with Mg(2+). Lys-455 is a (6S)-5-formyl-5,6,7,8-tetrahydrofolate binding site.

The protein belongs to the TRAFAC class TrmE-Era-EngA-EngB-Septin-like GTPase superfamily. TrmE GTPase family. As to quaternary structure, homodimer. Heterotetramer of two MnmE and two MnmG subunits. It depends on K(+) as a cofactor.

The protein localises to the cytoplasm. Exhibits a very high intrinsic GTPase hydrolysis rate. Involved in the addition of a carboxymethylaminomethyl (cmnm) group at the wobble position (U34) of certain tRNAs, forming tRNA-cmnm(5)s(2)U34. This chain is tRNA modification GTPase MnmE, found in Rhodospirillum rubrum (strain ATCC 11170 / ATH 1.1.1 / DSM 467 / LMG 4362 / NCIMB 8255 / S1).